The primary structure comprises 343 residues: UDP-glucuronic acid decarboxylase 6 (343 aa).

A disordered region spans residues 1–22; it reads MASNSSNGTTTTKPPPMPSPLR. Ala2 carries the N-acetylalanine modification. 62–87 provides a ligand contact to NAD(+); that stretch reads DNYFTGSKDNLKKWIGHPRFELIRHD. Arg171 is a substrate binding site. The active-site Proton acceptor is the Tyr174. 174 to 178 is a binding site for NAD(+); sequence YDEGK. Asn203 contacts substrate. Arg215 contributes to the NAD(+) binding site. Residues 216–220, 233–240, and 300–304 each bind substrate; these read VVSNF, QKPGTQTR, and DPRQR.

Belongs to the NAD(P)-dependent epimerase/dehydratase family. UDP-glucuronic acid decarboxylase subfamily. Requires NAD(+) as cofactor.

The protein resides in the cytoplasm. It catalyses the reaction UDP-alpha-D-glucuronate + H(+) = UDP-alpha-D-xylose + CO2. It functions in the pathway nucleotide-sugar biosynthesis; UDP-alpha-D-xylose biosynthesis; UDP-alpha-D-xylose from UDP-alpha-D-glucuronate: step 1/1. In terms of biological role, catalyzes the NAD-dependent decarboxylation of UDP-glucuronic acid to UDP-xylose. Necessary for the biosynthesis of the core tetrasaccharide in glycosaminoglycan biosynthesis. The chain is UDP-glucuronic acid decarboxylase 6 (UXS6) from Arabidopsis thaliana (Mouse-ear cress).